A 1048-amino-acid chain; its full sequence is Transcription factor mef2A (1048 aa).

The MADS-box domain maps to 1–61; it reads MGRNKITIEK…NKLFQYSSRD (61 aa). The segment covering 74 to 85 has biased composition (polar residues); sequence DNTRKNLTNQDY. Disordered regions lie at residues 74 to 263, 294 to 339, 386 to 812, and 916 to 1048; these read DNTR…QAAQ, QQQH…QQQQ, GIYG…NINT, and LLLT…EPKN. Residues 97–110 show a composition bias toward acidic residues; the sequence is DDEDGDDDGDEDLG. Composition is skewed to low complexity over residues 130 to 205, 212 to 263, 294 to 303, 327 to 339, 393 to 437, 446 to 466, and 481 to 500; these read NNNN…NANH, GNSA…QAAQ, QQQHQQQQQN, QQQQ…QQQQ, PPQM…IMNK, YYDY…NSNG, and QQQS…HQSP. Residues 249–304 adopt a coiled-coil conformation; the sequence is NNNSNGYQQQQQAAQQAVQQAQMAQQMHLQQQQQYQQLQHIQQQQQQQHQQQQQNM. Residues 506–522 are compositionally biased toward polar residues; it reads YSPQQQSPVLNSQNGHH. Basic residues predominate over residues 529-539; sequence HQMHHQQHQHQ. The segment covering 540-593 has biased composition (low complexity); the sequence is QHPQMQQQQQQQQQHQQHPQMQQIQQQQHPQMQQHQQHQQQHPQMQQQHMNNHQ. Positions 600 to 618 are enriched in polar residues; that stretch reads NSSPEINSQKNVHSSPLIM. A compositionally biased stretch (low complexity) spans 619–699; it reads NSNNNNNNNN…NSNNGNNNNN (81 aa). Polar residues predominate over residues 715 to 736; sequence SSPTIPEQPSINVSTSSNSAHV. Low complexity-rich tracts occupy residues 738–802, 924–960, and 982–1029; these read NNIT…SSST, SNNS…SSSS, and NNNN…NNSN.

The protein localises to the nucleus. In terms of biological role, transcription factor that regulates cell differentiation during development. Seems to negatively regulate prestalk gene expression and positively regulate prespore gene expression. The sequence is that of Transcription factor mef2A (mef2A) from Dictyostelium discoideum (Social amoeba).